The following is a 293-amino-acid chain: 4-hydroxy-tetrahydrodipicolinate synthase (293 aa).

T47 is a pyruvate binding site. Y136 (proton donor/acceptor) is an active-site residue. K164 serves as the catalytic Schiff-base intermediate with substrate. I206 provides a ligand contact to pyruvate.

This sequence belongs to the DapA family. Homotetramer; dimer of dimers.

The protein resides in the cytoplasm. The catalysed reaction is L-aspartate 4-semialdehyde + pyruvate = (2S,4S)-4-hydroxy-2,3,4,5-tetrahydrodipicolinate + H2O + H(+). It participates in amino-acid biosynthesis; L-lysine biosynthesis via DAP pathway; (S)-tetrahydrodipicolinate from L-aspartate: step 3/4. Its function is as follows. Catalyzes the condensation of (S)-aspartate-beta-semialdehyde [(S)-ASA] and pyruvate to 4-hydroxy-tetrahydrodipicolinate (HTPA). This chain is 4-hydroxy-tetrahydrodipicolinate synthase, found in Listeria innocua serovar 6a (strain ATCC BAA-680 / CLIP 11262).